The sequence spans 569 residues: Proline--tRNA ligase (569 aa).

This sequence belongs to the class-II aminoacyl-tRNA synthetase family. ProS type 1 subfamily. As to quaternary structure, homodimer.

Its subcellular location is the cytoplasm. It catalyses the reaction tRNA(Pro) + L-proline + ATP = L-prolyl-tRNA(Pro) + AMP + diphosphate. Its function is as follows. Catalyzes the attachment of proline to tRNA(Pro) in a two-step reaction: proline is first activated by ATP to form Pro-AMP and then transferred to the acceptor end of tRNA(Pro). As ProRS can inadvertently accommodate and process non-cognate amino acids such as alanine and cysteine, to avoid such errors it has two additional distinct editing activities against alanine. One activity is designated as 'pretransfer' editing and involves the tRNA(Pro)-independent hydrolysis of activated Ala-AMP. The other activity is designated 'posttransfer' editing and involves deacylation of mischarged Ala-tRNA(Pro). The misacylated Cys-tRNA(Pro) is not edited by ProRS. This Campylobacter jejuni subsp. jejuni serotype O:23/36 (strain 81-176) protein is Proline--tRNA ligase.